A 396-amino-acid chain; its full sequence is N-terminal EF-hand calcium-binding protein 3 (396 aa).

A compositionally biased stretch (pro residues) spans 14–34 (PPAPQPQPQTPRHPQLAPDPG). The disordered stretch occupies residues 14–36 (PPAPQPQPQTPRHPQLAPDPGPA). The 36-residue stretch at 36–71 (AGHTLFQDVFRRADKNDDGKLSFEEFQNYFADGVLS) folds into the EF-hand domain. Residues Asp49, Asn51, Asp53, Lys55, and Glu60 each contribute to the Ca(2+) site. Positions 181–190 (VEAQSRLCGS) are required for interaction with APBA3. The tract at residues 197-220 (ALRSVSRSSTWSPGSSDTGRSSEA) is disordered. Residues 206-217 (TWSPGSSDTGRS) show a composition bias toward polar residues. One can recognise an ABM domain in the interval 296-385 (LMAQRQVQVA…RAPDTLTTVF (90 aa)).

As to quaternary structure, interacts with the N-terminal domain of APBA2. Interacts with NEK2. Interacts with APBA3; APBA3 seems to mediate the interaction between NECAB3 and HIF1AN. Phosphorylated by NEK2. As to expression, strongly expressed in heart and skeletal muscle, moderately in brain and pancreas.

Its subcellular location is the golgi apparatus. Functionally, inhibits the interaction of APBA2 with amyloid-beta precursor protein (APP), and hence allows formation of amyloid-beta. May enhance the activity of HIF1A and thus promote glycolysis under normoxic conditions; the function requires its ABM domain and may implicate the stabilization of the interaction between HIF1AN and APBA3. The sequence is that of N-terminal EF-hand calcium-binding protein 3 (NECAB3) from Homo sapiens (Human).